A 418-amino-acid chain; its full sequence is ML-236A carboxylate methylbutanoyltransferase mlcH (418 aa).

Monacolin J is bound at residue Arg-78. The Acyl-ester intermediate role is filled by Ser-81. Arg-178, Tyr-193, and Tyr-262 together coordinate monacolin J. Gly-370 lines the 2-methylbutanoate pocket.

The protein belongs to the class-A beta-lactamase family.

It carries out the reaction ML-236A carboxylate + (S)-2-methylbutanoyl-[2-methylbutanoate polyketide synthase] = mevinic carboxylate + holo-[2-methylbutanoate polyketide synthase]. It functions in the pathway polyketide biosynthesis. Functionally, compactin diketide synthase; part of the gene cluster that mediates the biosynthesis of compactin, also known as mevastatin or ML-236B, and which acts as a potent competitive inhibitor of HMG-CoA reductase. Compactin biosynthesis is performed in two stages. The first stage is catalyzed by the nonaketide synthase mlcA, which belongs to type I polyketide synthases and catalyzes the iterative nine-step formation of the polyketide. This PKS stage is completed by the action of dehydrogenase mlcG, which catalyzes the NADPH-dependent reduction of the unsaturated tetra-, penta- and heptaketide intermediates that arise during the mlcA-mediated biosynthesis of the nonaketide chain and leads to dihydro-ML-236C carboxylate. Covalently bound dihydro-ML-236C carboxylate is released from mlcA by the mlcF esterase. Conversion of dihydro-ML-236C carboxylate into ML-236A carboxylate is subsequently performed with the participation of molecular oxygen and P450 monoogygenase mlcC. Finally, mlcH performs the conversion of ML-236A carboxylate to ML-236B/compactin carboxylate through the addition of the side-chain diketide moiety produced by the diketide synthase mlcB. The sequence is that of ML-236A carboxylate methylbutanoyltransferase mlcH from Penicillium citrinum.